Consider the following 714-residue polypeptide: Penicillin-binding protein 1F (714 aa).

The Cytoplasmic segment spans residues 1–12 (MFKIKKKKLFIP). The helical; Signal-anchor for type II membrane protein transmembrane segment at 13 to 33 (IIILVLTAFLALIGYISIIFL) threads the bilayer. Topologically, residues 34 to 714 (GHYVIDEKKL…DYVQPKLFSS (681 aa)) are extracellular. Positions 49-217 (SKIVDQNGDE…STYSPILHPD (169 aa)) are transglycosylase. Residue Glu87 is the Proton donor; for transglycosylase activity of the active site. The transpeptidase stretch occupies residues 297-592 (SKLQKTAYQV…SSYPTRLFKD (296 aa)). Ser359 acts as the Acyl-ester intermediate; for transpeptidase activity in catalysis.

In the N-terminal section; belongs to the glycosyltransferase 51 family. The protein in the C-terminal section; belongs to the transpeptidase family.

It is found in the cell membrane. It carries out the reaction [GlcNAc-(1-&gt;4)-Mur2Ac(oyl-L-Ala-gamma-D-Glu-L-Lys-D-Ala-D-Ala)](n)-di-trans,octa-cis-undecaprenyl diphosphate + beta-D-GlcNAc-(1-&gt;4)-Mur2Ac(oyl-L-Ala-gamma-D-Glu-L-Lys-D-Ala-D-Ala)-di-trans,octa-cis-undecaprenyl diphosphate = [GlcNAc-(1-&gt;4)-Mur2Ac(oyl-L-Ala-gamma-D-Glu-L-Lys-D-Ala-D-Ala)](n+1)-di-trans,octa-cis-undecaprenyl diphosphate + di-trans,octa-cis-undecaprenyl diphosphate + H(+). The catalysed reaction is Preferential cleavage: (Ac)2-L-Lys-D-Ala-|-D-Ala. Also transpeptidation of peptidyl-alanyl moieties that are N-acyl substituents of D-alanine.. Its pathway is cell wall biogenesis; peptidoglycan biosynthesis. In terms of biological role, cell wall formation. May be involved in outgrowth of the germinated spore or it could function in the synthesis of the germ cell wall. This chain is Penicillin-binding protein 1F (pbpF), found in Bacillus subtilis (strain 168).